The chain runs to 378 residues: GTPase Obg (378 aa).

The Obg domain maps to 1 to 159; that stretch reads MKFVDEATIE…RRLRLELKVL (159 aa). Residues 160-336 form the OBG-type G domain; that stretch reads ADVGLLGLPN…LIWALQDYLD (177 aa). GTP contacts are provided by residues 166–173, 191–195, 213–216, 288–291, and 317–319; these read GLPNAGKS, FTTLH, DIPG, NKLD, and SGL. The Mg(2+) site is built by Ser173 and Thr193. Residues 345-378 are disordered; sequence AQDQADGTYVAEDPRFDATRSDAAPPGAPRGGDE.

Belongs to the TRAFAC class OBG-HflX-like GTPase superfamily. OBG GTPase family. In terms of assembly, monomer. Mg(2+) serves as cofactor.

The protein resides in the cytoplasm. Its function is as follows. An essential GTPase which binds GTP, GDP and possibly (p)ppGpp with moderate affinity, with high nucleotide exchange rates and a fairly low GTP hydrolysis rate. Plays a role in control of the cell cycle, stress response, ribosome biogenesis and in those bacteria that undergo differentiation, in morphogenesis control. The protein is GTPase Obg of Bordetella petrii (strain ATCC BAA-461 / DSM 12804 / CCUG 43448).